We begin with the raw amino-acid sequence, 446 residues long: Xylose isomerase 2 (446 aa).

Active-site residues include H109 and D112. Mg(2+) is bound by residues E240, E276, H279, D304, D315, D317, and D347.

It belongs to the xylose isomerase family. Homotetramer. Requires Mg(2+) as cofactor.

Its subcellular location is the cytoplasm. The enzyme catalyses alpha-D-xylose = alpha-D-xylulofuranose. This is Xylose isomerase 2 from Xanthomonas campestris pv. campestris (strain 8004).